We begin with the raw amino-acid sequence, 330 residues long: Ferredoxin--NADP reductase (330 aa).

FAD-binding residues include Glu-35, Gln-43, Tyr-48, Val-90, Phe-123, Asp-285, and Thr-326.

It belongs to the ferredoxin--NADP reductase type 2 family. In terms of assembly, homodimer. It depends on FAD as a cofactor.

It carries out the reaction 2 reduced [2Fe-2S]-[ferredoxin] + NADP(+) + H(+) = 2 oxidized [2Fe-2S]-[ferredoxin] + NADPH. This is Ferredoxin--NADP reductase from Streptococcus agalactiae serotype Ia (strain ATCC 27591 / A909 / CDC SS700).